The primary structure comprises 102 residues: Circadian clock oscillator protein KaiA (102 aa).

One can recognise a KaiA C-terminal domain in the interval 1-102 (MTQEVDQQIL…CEAYRGAIFK (102 aa)).

This sequence belongs to the KaiA family. In terms of assembly, homodimer. The KaiABC complex composition changes during the circadian cycle to control KaiC phosphorylation. Complexes KaiC(6), KaiA(2-4):KaiC(6), KaiB(6):KaiC(6) and KaiC(6):KaiB(6):KaiA(12) are among the most important forms, many form cooperatively. KaiA and CikA bind to the same region of the KaiB(fs) form and therefore compete.

Its function is as follows. Key component of the KaiABC oscillator complex, which constitutes the main circadian regulator in cyanobacteria. Complex composition changes during the circadian cycle to control KaiC phosphorylation. KaiA stimulates KaiC autophosphorylation, while KaiB sequesters KaiA, leading to KaiC autodephosphorylation. KaiA binding to the KaiC CII domain during the subjective day yields KaiA(2-4):KaiC(6) complexes which stimulate KaiC autophosphorylation. Phospho-Ser-431 KaiC accumulation triggers binding of KaiB during the subjective night to form the KaiB(6):KaiC(6) complex, leading to changes in the output regulators CikA and SasA. KaiB(6):KaiC(6) formation exposes a site for KaiA binding on KaiB that sequesters KaiA from KaiC's CII domain, making the KaiC(6):KaiB(6):KaiA(12) complex resulting in KaiC autodephosphorylation. Complete dephosphorylation of KaiC leads to dissociation of KaiA(2):KaiB(1), completing 1 cycle of the Kai oscillator. The chain is Circadian clock oscillator protein KaiA from Nostoc sp. (strain PCC 7120 / SAG 25.82 / UTEX 2576).